Reading from the N-terminus, the 336-residue chain is N-acetyl-gamma-glutamyl-phosphate reductase (336 aa).

Cys-148 is a catalytic residue.

It belongs to the NAGSA dehydrogenase family. Type 1 subfamily.

Its subcellular location is the cytoplasm. It carries out the reaction N-acetyl-L-glutamate 5-semialdehyde + phosphate + NADP(+) = N-acetyl-L-glutamyl 5-phosphate + NADPH + H(+). It participates in amino-acid biosynthesis; L-arginine biosynthesis; N(2)-acetyl-L-ornithine from L-glutamate: step 3/4. Catalyzes the NADPH-dependent reduction of N-acetyl-5-glutamyl phosphate to yield N-acetyl-L-glutamate 5-semialdehyde. The chain is N-acetyl-gamma-glutamyl-phosphate reductase from Campylobacter curvus (strain 525.92).